The primary structure comprises 101 residues: MGTRYFLVGFLILLVLGFEAQGAHVPQQDEASSPALLTKMQKSLLGYWDTAKAAAHKLYKKTYLPTVDEKIRDIYSKSTAAVTTYAGIITDQVFSILSGED.

The first 22 residues, 1-22 (MGTRYFLVGFLILLVLGFEAQG), serve as a signal peptide directing secretion. Residues 66–74 (TVDEKIRDI) form a lipid binding region. The lipoprotein lipase cofactor stretch occupies residues 78–101 (STAAVTTYAGIITDQVFSILSGED).

Belongs to the apolipoprotein C2 family. Post-translationally, proapolipoprotein C-II is synthesized as a sialic acid containing glycoprotein which is subsequently desialylated prior to its proteolytic processing. Proapolipoprotein C-II, the major form found in plasma undergoes proteolytic cleavage of its N-terminal hexapeptide to generate apolipoprotein C-II, which occurs as the minor form in plasma.

It localises to the secreted. Functionally, component of chylomicrons, very low-density lipoproteins (VLDL), low-density lipoproteins (LDL), and high-density lipoproteins (HDL) in plasma. Plays an important role in lipoprotein metabolism as an activator of lipoprotein lipase. Both proapolipoprotein C-II and apolipoprotein C-II can activate lipoprotein lipase. The chain is Apolipoprotein C-II (APOC2) from Capra hircus aegagrus (Wild goat).